Reading from the N-terminus, the 136-residue chain is Nucleoside diphosphate kinase (136 aa).

6 residues coordinate ATP: K10, F58, R86, T92, R104, and N114. Catalysis depends on H117, which acts as the Pros-phosphohistidine intermediate.

It belongs to the NDK family. Homotetramer. Mg(2+) serves as cofactor.

It is found in the cytoplasm. It catalyses the reaction a 2'-deoxyribonucleoside 5'-diphosphate + ATP = a 2'-deoxyribonucleoside 5'-triphosphate + ADP. The enzyme catalyses a ribonucleoside 5'-diphosphate + ATP = a ribonucleoside 5'-triphosphate + ADP. Functionally, major role in the synthesis of nucleoside triphosphates other than ATP. The ATP gamma phosphate is transferred to the NDP beta phosphate via a ping-pong mechanism, using a phosphorylated active-site intermediate. The sequence is that of Nucleoside diphosphate kinase from Mycobacterium ulcerans (strain Agy99).